Here is a 498-residue protein sequence, read N- to C-terminus: Tumor necrosis factor receptor superfamily member 8 (498 aa).

The signal sequence occupies residues 1 to 18 (MSALLTAAGLLFLGMLQA). At 19 to 287 (FPTDRPLKTT…STGTPFLDPG (269 aa)) the chain is on the extracellular side. 2 TNFR-Cys repeats span residues 68–105 (QCAP…PRIC) and 106–146 (ECQP…DTIC). Disulfide bonds link Cys69-Cys81, Cys84-Cys97, Cys87-Cys105, Cys107-Cys121, and Cys128-Cys146. The interval 142 to 168 (KDTICELPSSGSGPNCSNPGDRKTLTS) is disordered. Residues 149–160 (PSSGSGPNCSNP) are compositionally biased toward low complexity. 3 N-linked (GlcNAc...) asparagine glycosylation sites follow: Asn156, Asn183, and Asn229. Positions 204 to 256 (ELVKVPESSSSKAREPSPDPGNAEKNMTLELPSPGTLPDISTSENSKEPASTA) are disordered. Residues 242 to 256 (DISTSENSKEPASTA) are compositionally biased toward polar residues. Residues 288–308 (PVLFWVAMVVLLVGSGSFLLC) form a helical membrane-spanning segment. The Cytoplasmic portion of the chain corresponds to 309–498 (YWKACRRRFQ…DHGPTTVSEK (190 aa)). The span at 338-358 (DSCPTEKLTQPQRSGSVTDPS) shows a compositional bias: polar residues. Disordered regions lie at residues 338–370 (DSCP…SPPP), 389–411 (LDDS…VSTE), and 436–498 (EVPE…VSEK). Ser339 and Ser353 each carry phosphoserine. Composition is skewed to basic and acidic residues over residues 402-411 (EPPEPRVSTE), 456-465 (EVDHAPHYPE), and 484-498 (EGGK…VSEK).

It belongs to the TNFR8 family. As to quaternary structure, interacts with TRAF1, TRAF2, TRAF3 and TRAF5. Detected in thymus and in activated splenocytes.

It localises to the cell membrane. Functionally, receptor for TNFSF8/CD30L. May play a role in the regulation of cellular growth and transformation of activated lymphoblasts. Regulates gene expression through activation of NF-kappa-B. The chain is Tumor necrosis factor receptor superfamily member 8 from Mus musculus (Mouse).